Consider the following 277-residue polypeptide: MAVKKFNPITPSRRQMTMPTFEEITSQQPEKSLLVSLKSKAGRNAQGKITVRHRGGGVKRKYRIIDFKRNKDSIPAKVATIEYDPNRSAYIALVVYTDGEKRYIIAPAGLKVGDVIVSGPDSDIKPGNALPLKNIPVGTVIHNIELQKGKGGQLVRSAGNSAQLMAKEGNYATLRLPSGEMRYVRIECRATIGTVSNPTNDIVNIGKAGRKRHMGWRPTVRGSVMNPNDHPHGGGEGKSPVGRPSPVTPWGKPALGYKTRKNKKYSDRFIIKGRNAK.

A disordered region spans residues 223-261; the sequence is SVMNPNDHPHGGGEGKSPVGRPSPVTPWGKPALGYKTRK.

The protein belongs to the universal ribosomal protein uL2 family. Part of the 50S ribosomal subunit. Forms a bridge to the 30S subunit in the 70S ribosome.

One of the primary rRNA binding proteins. Required for association of the 30S and 50S subunits to form the 70S ribosome, for tRNA binding and peptide bond formation. It has been suggested to have peptidyltransferase activity; this is somewhat controversial. Makes several contacts with the 16S rRNA in the 70S ribosome. The chain is Large ribosomal subunit protein uL2 from Clostridium botulinum (strain Alaska E43 / Type E3).